A 290-amino-acid chain; its full sequence is 4-hydroxy-3-methylbut-2-enyl diphosphate reductase (290 aa).

Cysteine 13 contacts [4Fe-4S] cluster. 2 residues coordinate (2E)-4-hydroxy-3-methylbut-2-enyl diphosphate: histidine 41 and histidine 75. Positions 41 and 75 each coordinate dimethylallyl diphosphate. Positions 41 and 75 each coordinate isopentenyl diphosphate. A [4Fe-4S] cluster-binding site is contributed by cysteine 97. Histidine 129 contributes to the (2E)-4-hydroxy-3-methylbut-2-enyl diphosphate binding site. Histidine 129 is a dimethylallyl diphosphate binding site. Histidine 129 is an isopentenyl diphosphate binding site. Glutamate 131 functions as the Proton donor in the catalytic mechanism. A (2E)-4-hydroxy-3-methylbut-2-enyl diphosphate-binding site is contributed by threonine 167. Residue cysteine 198 participates in [4Fe-4S] cluster binding. Positions 226, 227, 228, and 270 each coordinate (2E)-4-hydroxy-3-methylbut-2-enyl diphosphate. Dimethylallyl diphosphate is bound by residues serine 226, serine 227, asparagine 228, and serine 270. Residues serine 226, serine 227, asparagine 228, and serine 270 each coordinate isopentenyl diphosphate.

It belongs to the IspH family. The cofactor is [4Fe-4S] cluster.

It catalyses the reaction isopentenyl diphosphate + 2 oxidized [2Fe-2S]-[ferredoxin] + H2O = (2E)-4-hydroxy-3-methylbut-2-enyl diphosphate + 2 reduced [2Fe-2S]-[ferredoxin] + 2 H(+). The catalysed reaction is dimethylallyl diphosphate + 2 oxidized [2Fe-2S]-[ferredoxin] + H2O = (2E)-4-hydroxy-3-methylbut-2-enyl diphosphate + 2 reduced [2Fe-2S]-[ferredoxin] + 2 H(+). It participates in isoprenoid biosynthesis; dimethylallyl diphosphate biosynthesis; dimethylallyl diphosphate from (2E)-4-hydroxy-3-methylbutenyl diphosphate: step 1/1. Its pathway is isoprenoid biosynthesis; isopentenyl diphosphate biosynthesis via DXP pathway; isopentenyl diphosphate from 1-deoxy-D-xylulose 5-phosphate: step 6/6. Functionally, catalyzes the conversion of 1-hydroxy-2-methyl-2-(E)-butenyl 4-diphosphate (HMBPP) into a mixture of isopentenyl diphosphate (IPP) and dimethylallyl diphosphate (DMAPP). Acts in the terminal step of the DOXP/MEP pathway for isoprenoid precursor biosynthesis. The chain is 4-hydroxy-3-methylbut-2-enyl diphosphate reductase from Parabacteroides distasonis (strain ATCC 8503 / DSM 20701 / CIP 104284 / JCM 5825 / NCTC 11152).